The primary structure comprises 704 residues: Penicillin-binding protein H (704 aa).

The chain crosses the membrane as a helical span at residues 23–43 (FFLAVFVLFTALIFKLGVVQI). The interval 197 to 223 (MNPNKSNSNGKNGALLDEKKNSSQRPK) is disordered. Residues 200–209 (NKSNSNGKNG) are compositionally biased toward low complexity. Over residues 212–223 (LDEKKNSSQRPK) the composition is skewed to basic and acidic residues. Residue serine 415 is the Acyl-ester intermediate of the active site.

It belongs to the transpeptidase family.

It localises to the cell membrane. It catalyses the reaction Preferential cleavage: (Ac)2-L-Lys-D-Ala-|-D-Ala. Also transpeptidation of peptidyl-alanyl moieties that are N-acyl substituents of D-alanine.. It participates in cell wall biogenesis; peptidoglycan biosynthesis. Its function is as follows. Involved in the polymerization of peptidoglycan. Plays a redundant role with PBP-2A (pbpA) in determining the rod shape of the cell during vegetative growth and spore outgrowth. In Bacillus subtilis (strain 168), this protein is Penicillin-binding protein H.